A 176-amino-acid polypeptide reads, in one-letter code: NAD(P)H-quinone oxidoreductase subunit 6, chloroplastic (176 aa).

5 helical membrane-spanning segments follow: residues 10–30, 32–52, 61–81, 95–115, and 152–172; these read FILVFLGLVLILGGLAVVLLP, PIYSAFSLGLVLVCISLLYIL, AQLLIYVGAINVLIIFAVMFL, VGDGVTSVVCTSLFASLITTI, and FLIPFELISIILLVALIGAIA.

Belongs to the complex I subunit 6 family. NDH is composed of at least 16 different subunits, 5 of which are encoded in the nucleus.

The protein localises to the plastid. The protein resides in the chloroplast thylakoid membrane. The enzyme catalyses a plastoquinone + NADH + (n+1) H(+)(in) = a plastoquinol + NAD(+) + n H(+)(out). The catalysed reaction is a plastoquinone + NADPH + (n+1) H(+)(in) = a plastoquinol + NADP(+) + n H(+)(out). Its function is as follows. NDH shuttles electrons from NAD(P)H:plastoquinone, via FMN and iron-sulfur (Fe-S) centers, to quinones in the photosynthetic chain and possibly in a chloroplast respiratory chain. The immediate electron acceptor for the enzyme in this species is believed to be plastoquinone. Couples the redox reaction to proton translocation, and thus conserves the redox energy in a proton gradient. This chain is NAD(P)H-quinone oxidoreductase subunit 6, chloroplastic (ndhG), found in Trachelium caeruleum (Blue throatwort).